Consider the following 127-residue polypeptide: Holo-[acyl-carrier-protein] synthase (127 aa).

Positions 9 and 58 each coordinate Mg(2+).

The protein belongs to the P-Pant transferase superfamily. AcpS family. The cofactor is Mg(2+).

Its subcellular location is the cytoplasm. The catalysed reaction is apo-[ACP] + CoA = holo-[ACP] + adenosine 3',5'-bisphosphate + H(+). Its function is as follows. Transfers the 4'-phosphopantetheine moiety from coenzyme A to a Ser of acyl-carrier-protein. The chain is Holo-[acyl-carrier-protein] synthase from Shewanella sp. (strain W3-18-1).